The primary structure comprises 396 residues: Small ribosomal subunit protein uS9m (396 aa).

Residue Lys-287 is modified to N6-acetyllysine. Residues 374-396 (PRVRERKKPGQEGARRKFTWKKR) form a disordered region.

The protein belongs to the universal ribosomal protein uS9 family. In terms of assembly, component of the mitochondrial small ribosomal subunit (mt-SSU). Mature mammalian 55S mitochondrial ribosomes consist of a small (28S) and a large (39S) subunit. The 28S small subunit contains a 12S ribosomal RNA (12S mt-rRNA) and 30 different proteins. The 39S large subunit contains a 16S rRNA (16S mt-rRNA), a copy of mitochondrial valine transfer RNA (mt-tRNA(Val)), which plays an integral structural role, and 52 different proteins.

The protein localises to the mitochondrion. This chain is Small ribosomal subunit protein uS9m (MRPS9), found in Homo sapiens (Human).